Consider the following 274-residue polypeptide: ATP synthase subunit a (274 aa).

5 helical membrane-spanning segments follow: residues 43–63, 103–123, 149–169, 223–243, and 245–265; these read TLNI…LFVF, VIAP…MMDL, DVSI…FYSI, LIFI…LSLP, and AIFH…LTIV.

It belongs to the ATPase A chain family. As to quaternary structure, F-type ATPases have 2 components, CF(1) - the catalytic core - and CF(0) - the membrane proton channel. CF(1) has five subunits: alpha(3), beta(3), gamma(1), delta(1), epsilon(1). CF(0) has three main subunits: a(1), b(2) and c(9-12). The alpha and beta chains form an alternating ring which encloses part of the gamma chain. CF(1) is attached to CF(0) by a central stalk formed by the gamma and epsilon chains, while a peripheral stalk is formed by the delta and b chains.

It is found in the cell inner membrane. Functionally, key component of the proton channel; it plays a direct role in the translocation of protons across the membrane. The sequence is that of ATP synthase subunit a from Yersinia enterocolitica serotype O:8 / biotype 1B (strain NCTC 13174 / 8081).